A 247-amino-acid chain; its full sequence is MAQDDEDVGLALGLSLGSGGHRRQRESRDEAPSSAAASLLTLRLPAESGGQPQVVVKREVVRAEEEEYEYEYERALYSSSAAAADDDEGCNSRKKLRLSKEQSALLEDRFKEHSTLNPKQKVALAKQLNLRPRQVEVWFQNRRARTKLKQTEVDCELLKRCCETLTEENRRLHRELQQLRALTHSTAAGFFMATTLPVPAATLSICPSCERLATAAAAGASPTAAADRTNKPTAPHLFSPFAKSAAC.

The tract at residues 1-44 (MAQDDEDVGLALGLSLGSGGHRRQRESRDEAPSSAAASLLTLRL) is disordered. Positions 32 to 44 (PSSAAASLLTLRL) are enriched in low complexity. A DNA-binding region (homeobox) is located at residues 91–150 (NSRKKLRLSKEQSALLEDRFKEHSTLNPKQKVALAKQLNLRPRQVEVWFQNRRARTKLKQ). Residues 149-193 (KQTEVDCELLKRCCETLTEENRRLHRELQQLRALTHSTAAGFFMA) are leucine-zipper. Positions 221-247 (SPTAAADRTNKPTAPHLFSPFAKSAAC) are disordered.

The protein belongs to the HD-ZIP homeobox family. Class II subfamily. In terms of tissue distribution, expressed in seedlings, stems, leaf blades and panicles.

It localises to the nucleus. In terms of biological role, probable transcription factor. This is Homeobox-leucine zipper protein HOX15 (HOX15) from Oryza sativa subsp. japonica (Rice).